Consider the following 196-residue polypeptide: Probable malonic semialdehyde reductase RutE (196 aa).

Belongs to the nitroreductase family. HadB/RutE subfamily. FMN is required as a cofactor.

It catalyses the reaction 3-hydroxypropanoate + NADP(+) = 3-oxopropanoate + NADPH + H(+). In terms of biological role, may reduce toxic product malonic semialdehyde to 3-hydroxypropionic acid, which is excreted. The sequence is that of Probable malonic semialdehyde reductase RutE from Shigella sonnei (strain Ss046).